The sequence spans 509 residues: ATP synthase subunit alpha (509 aa).

169–176 is a binding site for ATP; sequence GDRQTGKT.

It belongs to the ATPase alpha/beta chains family. In terms of assembly, F-type ATPases have 2 components, CF(1) - the catalytic core - and CF(0) - the membrane proton channel. CF(1) has five subunits: alpha(3), beta(3), gamma(1), delta(1), epsilon(1). CF(0) has three main subunits: a(1), b(2) and c(9-12). The alpha and beta chains form an alternating ring which encloses part of the gamma chain. CF(1) is attached to CF(0) by a central stalk formed by the gamma and epsilon chains, while a peripheral stalk is formed by the delta and b chains.

It is found in the cell inner membrane. The catalysed reaction is ATP + H2O + 4 H(+)(in) = ADP + phosphate + 5 H(+)(out). Produces ATP from ADP in the presence of a proton gradient across the membrane. The alpha chain is a regulatory subunit. This Rhizobium etli (strain ATCC 51251 / DSM 11541 / JCM 21823 / NBRC 15573 / CFN 42) protein is ATP synthase subunit alpha.